Reading from the N-terminus, the 340-residue chain is MLSLSKNWNTLIKPNKVAYENFPETNNKAKIVVEPLERGFGLTLGNAMRRVLLSSLQGAAITSIKIPAIEHEFSSIPGVKEDVSEVILNIKGIEVKMHVAEKRIMKLKATGPCVVTAGMIETGHDVEILNPDHVICDLAKDKQLEMELTCKVGKGYVLSTNSYEDNLPIGEIAIDALFNPVKSVTYKVENTRVGQVTDYDKLIMFVETNGDVLPEMAVGLAARILQEQLQLFISFEEQEEDKQVKTDTLPFSPYLLKRVDELELSVRSANCLKNDNIIYIGDLVKRTESDMLRTPNFGRKSLNEIKEILAKFNLRFGMDVPDWPPENIQELSKRYEDSYN.

The segment at 1–236 is alpha N-terminal domain (alpha-NTD); sequence MLSLSKNWNT…EQLQLFISFE (236 aa). The segment at 251–340 is alpha C-terminal domain (alpha-CTD); that stretch reads FSPYLLKRVD…LSKRYEDSYN (90 aa).

Belongs to the RNA polymerase alpha chain family. In terms of assembly, homodimer. The RNAP catalytic core consists of 2 alpha, 1 beta, 1 beta' and 1 omega subunit. When a sigma factor is associated with the core the holoenzyme is formed, which can initiate transcription.

It carries out the reaction RNA(n) + a ribonucleoside 5'-triphosphate = RNA(n+1) + diphosphate. Functionally, DNA-dependent RNA polymerase catalyzes the transcription of DNA into RNA using the four ribonucleoside triphosphates as substrates. This is DNA-directed RNA polymerase subunit alpha from Rickettsia conorii (strain ATCC VR-613 / Malish 7).